A 276-amino-acid polypeptide reads, in one-letter code: Large ribosomal subunit protein uL2 (276 aa).

The interval alanine 224 to glycine 276 is disordered. The segment covering lysine 254–lysine 270 has biased composition (basic residues).

It belongs to the universal ribosomal protein uL2 family. As to quaternary structure, part of the 50S ribosomal subunit. Forms a bridge to the 30S subunit in the 70S ribosome.

One of the primary rRNA binding proteins. Required for association of the 30S and 50S subunits to form the 70S ribosome, for tRNA binding and peptide bond formation. It has been suggested to have peptidyltransferase activity; this is somewhat controversial. Makes several contacts with the 16S rRNA in the 70S ribosome. In Ehrlichia chaffeensis (strain ATCC CRL-10679 / Arkansas), this protein is Large ribosomal subunit protein uL2.